A 134-amino-acid chain; its full sequence is uncharacterized protein (134 aa).

This sequence belongs to the ycf68 family.

It is found in the plastid. It localises to the chloroplast. This is an uncharacterized protein from Saccharum hybrid (Sugarcane).